A 249-amino-acid chain; its full sequence is tRNA pseudouridine synthase A (249 aa).

The active-site Nucleophile is Asp53. Tyr111 contributes to the substrate binding site.

It belongs to the tRNA pseudouridine synthase TruA family. As to quaternary structure, homodimer.

It carries out the reaction uridine(38/39/40) in tRNA = pseudouridine(38/39/40) in tRNA. Functionally, formation of pseudouridine at positions 38, 39 and 40 in the anticodon stem and loop of transfer RNAs. This chain is tRNA pseudouridine synthase A, found in Streptococcus suis (strain 98HAH33).